The chain runs to 158 residues: UPF0758 protein VC_1786 (158 aa).

The MPN domain occupies 37 to 158 (TFARTENTTE…SVSFAERGWL (122 aa)). Residues histidine 108, histidine 110, and aspartate 121 each contribute to the Zn(2+) site. A JAMM motif motif is present at residues 108–121 (HNHPSGDPEPSQAD).

This sequence belongs to the UPF0758 family.

This is UPF0758 protein VC_1786 from Vibrio cholerae serotype O1 (strain ATCC 39315 / El Tor Inaba N16961).